Consider the following 326-residue polypeptide: uncharacterized protein (326 aa).

Residue 28–35 (GPINSGKT) coordinates ATP.

This sequence belongs to the archaeal ATPase family.

This is an uncharacterized protein from Pyrococcus abyssi (strain GE5 / Orsay).